The following is a 218-amino-acid chain: Molybdenum cofactor guanylyltransferase (218 aa).

GTP is bound by residues 16 to 18 (LAG), Lys-28, Asn-56, Asp-74, and Asp-109. Residue Asp-109 participates in Mg(2+) binding.

It belongs to the MobA family. In terms of assembly, monomer. Mg(2+) serves as cofactor.

The protein localises to the cytoplasm. The catalysed reaction is Mo-molybdopterin + GTP + H(+) = Mo-molybdopterin guanine dinucleotide + diphosphate. Its function is as follows. Transfers a GMP moiety from GTP to Mo-molybdopterin (Mo-MPT) cofactor (Moco or molybdenum cofactor) to form Mo-molybdopterin guanine dinucleotide (Mo-MGD) cofactor. The sequence is that of Molybdenum cofactor guanylyltransferase from Rhizobium meliloti (strain 1021) (Ensifer meliloti).